Reading from the N-terminus, the 81-residue chain is Putative membrane protein insertion efficiency factor (81 aa).

The protein belongs to the UPF0161 family.

It localises to the cell membrane. In terms of biological role, could be involved in insertion of integral membrane proteins into the membrane. This Geobacillus kaustophilus (strain HTA426) protein is Putative membrane protein insertion efficiency factor.